The chain runs to 557 residues: 2-isopropylmalate synthase (557 aa).

The Pyruvate carboxyltransferase domain maps to 33-307 (PLWLSTDLRD…DPGLDFSDID (275 aa)). Residues Asp42, His246, His248, and Asn282 each coordinate Mg(2+). The segment at 439 to 557 (AETPYALKGH…LGQQASIRAA (119 aa)) is regulatory domain.

The protein belongs to the alpha-IPM synthase/homocitrate synthase family. LeuA type 2 subfamily. In terms of assembly, homodimer. The cofactor is Mg(2+).

The protein resides in the cytoplasm. It carries out the reaction 3-methyl-2-oxobutanoate + acetyl-CoA + H2O = (2S)-2-isopropylmalate + CoA + H(+). Its pathway is amino-acid biosynthesis; L-leucine biosynthesis; L-leucine from 3-methyl-2-oxobutanoate: step 1/4. In terms of biological role, catalyzes the condensation of the acetyl group of acetyl-CoA with 3-methyl-2-oxobutanoate (2-ketoisovalerate) to form 3-carboxy-3-hydroxy-4-methylpentanoate (2-isopropylmalate). The polypeptide is 2-isopropylmalate synthase (Azotobacter vinelandii (strain DJ / ATCC BAA-1303)).